A 145-amino-acid polypeptide reads, in one-letter code: NADH dehydrogenase [ubiquinone] 1 alpha subcomplex subunit 12 (145 aa).

Residue Met1 is modified to N-acetylmethionine.

The protein belongs to the complex I NDUFA12 subunit family. In terms of assembly, complex I is composed of 45 different subunits.

The protein resides in the mitochondrion inner membrane. Its function is as follows. Accessory subunit of the mitochondrial membrane respiratory chain NADH dehydrogenase (Complex I), that is believed not to be involved in catalysis. Complex I functions in the transfer of electrons from NADH to the respiratory chain. The immediate electron acceptor for the enzyme is believed to be ubiquinone. The polypeptide is NADH dehydrogenase [ubiquinone] 1 alpha subcomplex subunit 12 (NDUFA12) (Bos taurus (Bovine)).